We begin with the raw amino-acid sequence, 1435 residues long: MGARASVLSAGELDKWEKIRLRPGGKKQYRLKHIVWASRELERFAVDPGLLETSEGCRQILGQLQPSLQTGSEELRSLYNTVATLYCVHQKIEVKDTKEALEKIEEEQNKSKKKAQQAAADTGNSSQVSQNYPIVQNLQGQMVHQAISPRTLNAWVKVVEEKAFSPEVIPMFSALSEGATPQDLNTMLNTVGGHQAAMQMLKETINEEAAEWDRLHPVHAGPIAPGQMREPRGSDIAGTTSTLQEQIGWMTNNPPIPVGEIYKRWIILGLNKIVRMYSPTSILDIRQGPKEPFRDYVDRFYKTLRAEQASQEVKNWMTETLLVQNANPDCKTILKALGPAATLEEMMTACQGVGGPGHKARVLAEAMSQVTNSATIMMQRGNFRNQRKTVKCFNCGKEGHIAKNCRAPRKKGCWKCGKEGHQMKDCTERQANFLREDLAFPQGKARKFSSEQTRANSPIRRERQVWRRDNNSLSEAGADRQGTVSFSFPQITLWQRPLVTIKIGGQLKEALLDTGADDTVLEEMNLPGRWKPKMIGGIGGFIKVRQYDQIPIEICGHKAIGTVLVGPTPVNIIGRNLLTQIGCTLNFPISPIETVPVKLKPGMDGPKVKQWPLTEEKIKALVEICTEMEKEGKISKIGPENPYNTPVFAIKKKDSTKWRKLVDFRELNKRTQDFWEVQLGIPHPAGLKKKKSVTVLDVGDAYFSVPLHEDFRKYTAFTIPSINNETPGTRYQYNVLPQGWKGSPAIFQSSMTTILEPFRKQNPDLVIYQYMDDLYVGSDLEIGQHRTKIEELRQHLLRWGFTTPDKKHQKEPPFLWMGYELHPDKWTVQPIVLPEKDSWTVNDIQKLVGKLNWASQIYAGIKVRQLCKLLRGTKALTEVIPLTEEAELELAENREILKEPVHGVYYDPSKDLIAEIQKQGQGQWTYQIYQEPFKNLKTGKYARTRGAHTNDVKQLTEAVQKIATESIVIWGKTPKFKLPIQKETWETWWTEYWQATWIPEWEFVNTPPLVKLWYQLEKEPIIGAETFYVDGAANRETKLGKAGYVTNKGRQKVVSLTDTTNQKTELQAIYLALQDSGLEVNIVTDSQYALGIIQAQPDRSESELVSQIIEQLIKKEKVYLAWVPAHKGIGGNEQVDKLVSAGIRKVLFLDGIDKAQEEHEKYHSNWRAMASDFNLPPVVAKEIVASCDKCQLKGEAMHGQVDCSPGIWQLDCTHLEGKVILVAVHVASGYIEAEVIPAETGQETAYFLLKLAGRWPVTTIHTDNGSNFTSATVKAACWWAGIKQEFGIPYNPQSQGVVESMNKELKKIIGQVRDQAEHLKTAVQMAVFIHNFKRKGGIGGYSAGERIVDIIATDIQTKELQKQITKIQNFRVYYRDSRDPLWKGPAKLLWKGEGAVVIQDNSDIKVVPRRKAKIIRDYGKQMAGDDCVAGRQDED.

Residue glycine 2 is the site of N-myristoyl glycine; by host attachment. The interaction with Gp41 stretch occupies residues 7-31 (VLSAGELDKWEKIRLRPGGKKQYRL). The segment at 8 to 43 (LSAGELDKWEKIRLRPGGKKQYRLKHIVWASRELER) is interaction with host CALM1. Residues 12 to 19 (ELDKWEKI) form an interaction with host AP3D1 region. The interaction with membrane phosphatidylinositol 4,5-bisphosphate and RNA stretch occupies residues 14 to 33 (DKWEKIRLRPGGKKQYRLKH). The Nuclear export signal signature appears at 16–22 (WEKIRLR). A Nuclear localization signal motif is present at residues 26 to 32 (KKQYRLK). An interaction with membrane phosphatidylinositol 4,5-bisphosphate region spans residues 73–77 (EELRS). Residues 106-128 (EEQNKSKKKAQQAAADTGNSSQV) are disordered. Tyrosine 132 is subject to Phosphotyrosine; by host. The tract at residues 189–227 (NTVGGHQAAMQMLKETINEEAAEWDRLHPVHAGPIAPGQ) is interaction with human PPIA/CYPA and NUP153. The dimerization/Multimerization of capsid protein p24 stretch occupies residues 277 to 363 (YSPTSILDIR…GGPGHKARVL (87 aa)). 2 consecutive CCHC-type zinc fingers follow at residues 390–407 (VKCF…NCRA) and 411–428 (KGCW…DCTE). Positions 489–493 (PQITL) are dimerization of protease. The Peptidase A2 domain maps to 508–577 (KEALLDTGAD…TPVNIIGRNL (70 aa)). Aspartate 513 functions as the For protease activity; shared with dimeric partner in the catalytic mechanism. Dimerization of protease regions lie at residues 537-543 (GIGGFIK) and 576-588 (NLLT…LNFP). Residues 631–821 (EGKISKIGPE…PPFLWMGYEL (191 aa)) form the Reverse transcriptase domain. Mg(2+) is bound by residues aspartate 697, aspartate 772, and aspartate 773. The segment at 814–822 (FLWMGYELH) is RT 'primer grip'. A Tryptophan repeat motif motif is present at residues 985–1001 (WETWWTEYWQATWIPEW). An RNase H type-1 domain is found at 1021–1144 (IIGAETFYVD…VDKLVSAGIR (124 aa)). Mg(2+)-binding residues include aspartate 1030, glutamate 1065, aspartate 1085, and aspartate 1136. The Integrase-type zinc-finger motif lies at 1150–1191 (DGIDKAQEEHEKYHSNWRAMASDFNLPPVVAKEIVASCDKCQ). Positions 1159, 1163, 1187, and 1190 each coordinate Zn(2+). One can recognise an Integrase catalytic domain in the interval 1201-1351 (VDCSPGIWQL…SAGERIVDII (151 aa)). Positions 1211, 1263, and 1299 each coordinate Mg(2+). The segment at residues 1370–1417 (FRVYYRDSRDPLWKGPAKLLWKGEGAVVIQDNSDIKVVPRRKAKIIRD) is a DNA-binding region (integrase-type).

As to quaternary structure, homotrimer; further assembles as hexamers of trimers. Interacts with gp41 (via C-terminus). Interacts with host CALM1; this interaction induces a conformational change in the Matrix protein, triggering exposure of the myristate group. Interacts with host AP3D1; this interaction allows the polyprotein trafficking to multivesicular bodies during virus assembly. Part of the pre-integration complex (PIC) which is composed of viral genome, matrix protein, Vpr and integrase. Homodimer; the homodimer further multimerizes as homohexamers or homopentamers. Interacts with human PPIA/CYPA; This interaction stabilizes the capsid. Interacts with human NUP153. Interacts with host PDZD8; this interaction stabilizes the capsid. Interacts with monkey TRIM5; this interaction destabilizes the capsid. In terms of assembly, homodimer, whose active site consists of two apposed aspartic acid residues. As to quaternary structure, heterodimer of p66 RT and p51 RT (RT p66/p51). Heterodimerization of RT is essential for DNA polymerase activity. The overall folding of the subdomains is similar in p66 RT and p51 RT but the spatial arrangements of the subdomains are dramatically different. Homotetramer; may further associate as a homohexadecamer. Part of the pre-integration complex (PIC) which is composed of viral genome, matrix protein, Vpr and integrase. Interacts with human SMARCB1/INI1 and human PSIP1/LEDGF isoform 1. Interacts with human KPNA3; this interaction might play a role in nuclear import of the pre-integration complex. Interacts with human NUP153; this interaction might play a role in nuclear import of the pre-integration complex. The cofactor is Mg(2+). Specific enzymatic cleavages by the viral protease yield mature proteins. The protease is released by autocatalytic cleavage. The polyprotein is cleaved during and after budding, this process is termed maturation. Proteolytic cleavage of p66 RT removes the RNase H domain to yield the p51 RT subunit. Nucleocapsid protein p7 might be further cleaved after virus entry. Post-translationally, tyrosine phosphorylated presumably in the virion by a host kinase. Phosphorylation is apparently not a major regulator of membrane association. In terms of processing, phosphorylated possibly by host MAPK1; this phosphorylation is necessary for Pin1-mediated virion uncoating. Methylated by host PRMT6, impairing its function by reducing RNA annealing and the initiation of reverse transcription.

Its subcellular location is the host cell membrane. The protein localises to the host endosome. It is found in the host multivesicular body. It localises to the virion membrane. The protein resides in the host nucleus. Its subcellular location is the host cytoplasm. The protein localises to the virion. The catalysed reaction is Specific for a P1 residue that is hydrophobic, and P1' variable, but often Pro.. It carries out the reaction Endohydrolysis of RNA in RNA/DNA hybrids. Three different cleavage modes: 1. sequence-specific internal cleavage of RNA. Human immunodeficiency virus type 1 and Moloney murine leukemia virus enzymes prefer to cleave the RNA strand one nucleotide away from the RNA-DNA junction. 2. RNA 5'-end directed cleavage 13-19 nucleotides from the RNA end. 3. DNA 3'-end directed cleavage 15-20 nucleotides away from the primer terminus.. The enzyme catalyses 3'-end directed exonucleolytic cleavage of viral RNA-DNA hybrid.. It catalyses the reaction DNA(n) + a 2'-deoxyribonucleoside 5'-triphosphate = DNA(n+1) + diphosphate. Protease: The viral protease is inhibited by many synthetic protease inhibitors (PIs), such as amprenavir, atazanavir, indinavir, loprinavir, nelfinavir, ritonavir and saquinavir. Use of protease inhibitors in tritherapy regimens permit more ambitious therapeutic strategies. Reverse transcriptase/ribonuclease H: RT can be inhibited either by nucleoside RT inhibitors (NRTIs) or by non nucleoside RT inhibitors (NNRTIs). NRTIs act as chain terminators, whereas NNRTIs inhibit DNA polymerization by binding a small hydrophobic pocket near the RT active site and inducing an allosteric change in this region. Classical NRTIs are abacavir, adefovir (PMEA), didanosine (ddI), lamivudine (3TC), stavudine (d4T), tenofovir (PMPA), zalcitabine (ddC), and zidovudine (AZT). Classical NNRTIs are atevirdine (BHAP U-87201E), delavirdine, efavirenz (DMP-266), emivirine (I-EBU), and nevirapine (BI-RG-587). The tritherapies used as a basic effective treatment of AIDS associate two NRTIs and one NNRTI. Functionally, mediates, with Gag polyprotein, the essential events in virion assembly, including binding the plasma membrane, making the protein-protein interactions necessary to create spherical particles, recruiting the viral Env proteins, and packaging the genomic RNA via direct interactions with the RNA packaging sequence (Psi). Gag-Pol polyprotein may regulate its own translation, by the binding genomic RNA in the 5'-UTR. At low concentration, the polyprotein would promote translation, whereas at high concentration, the polyprotein would encapsidate genomic RNA and then shut off translation. In terms of biological role, targets the polyprotein to the plasma membrane via a multipartite membrane-binding signal, that includes its myristoylated N-terminus. Matrix protein is part of the pre-integration complex. Implicated in the release from host cell mediated by Vpu. Binds to RNA. Its function is as follows. Forms the conical core that encapsulates the genomic RNA-nucleocapsid complex in the virion. Most core are conical, with only 7% tubular. The core is constituted by capsid protein hexamer subunits. The core is disassembled soon after virion entry. Host restriction factors such as TRIM5-alpha or TRIMCyp bind retroviral capsids and cause premature capsid disassembly, leading to blocks in reverse transcription. Capsid restriction by TRIM5 is one of the factors which restricts HIV-1 to the human species. Host PIN1 apparently facilitates the virion uncoating. On the other hand, interactions with PDZD8 or CYPA stabilize the capsid. Encapsulates and protects viral dimeric unspliced genomic RNA (gRNA). Binds these RNAs through its zinc fingers. Acts as a nucleic acid chaperone which is involved in rearangement of nucleic acid secondary structure during gRNA retrotranscription. Also facilitates template switch leading to recombination. As part of the polyprotein, participates in gRNA dimerization, packaging, tRNA incorporation and virion assembly. Functionally, aspartyl protease that mediates proteolytic cleavages of Gag and Gag-Pol polyproteins during or shortly after the release of the virion from the plasma membrane. Cleavages take place as an ordered, step-wise cascade to yield mature proteins. This process is called maturation. Displays maximal activity during the budding process just prior to particle release from the cell. Also cleaves Nef and Vif, probably concomitantly with viral structural proteins on maturation of virus particles. Hydrolyzes host EIF4GI and PABP1 in order to shut off the capped cellular mRNA translation. The resulting inhibition of cellular protein synthesis serves to ensure maximal viral gene expression and to evade host immune response. Also mediates cleavage of host YTHDF3. Mediates cleavage of host CARD8, thereby activating the CARD8 inflammasome, leading to the clearance of latent HIV-1 in patient CD4(+) T-cells after viral reactivation; in contrast, HIV-1 can evade CARD8-sensing when its protease remains inactive in infected cells prior to viral budding. In terms of biological role, multifunctional enzyme that converts the viral RNA genome into dsDNA in the cytoplasm, shortly after virus entry into the cell. This enzyme displays a DNA polymerase activity that can copy either DNA or RNA templates, and a ribonuclease H (RNase H) activity that cleaves the RNA strand of RNA-DNA heteroduplexes in a partially processive 3' to 5' endonucleasic mode. Conversion of viral genomic RNA into dsDNA requires many steps. A tRNA(3)-Lys binds to the primer-binding site (PBS) situated at the 5'-end of the viral RNA. RT uses the 3' end of the tRNA primer to perform a short round of RNA-dependent minus-strand DNA synthesis. The reading proceeds through the U5 region and ends after the repeated (R) region which is present at both ends of viral RNA. The portion of the RNA-DNA heteroduplex is digested by the RNase H, resulting in a ssDNA product attached to the tRNA primer. This ssDNA/tRNA hybridizes with the identical R region situated at the 3' end of viral RNA. This template exchange, known as minus-strand DNA strong stop transfer, can be either intra- or intermolecular. RT uses the 3' end of this newly synthesized short ssDNA to perform the RNA-dependent minus-strand DNA synthesis of the whole template. RNase H digests the RNA template except for two polypurine tracts (PPTs) situated at the 5'-end and near the center of the genome. It is not clear if both polymerase and RNase H activities are simultaneous. RNase H probably can proceed both in a polymerase-dependent (RNA cut into small fragments by the same RT performing DNA synthesis) and a polymerase-independent mode (cleavage of remaining RNA fragments by free RTs). Secondly, RT performs DNA-directed plus-strand DNA synthesis using the PPTs that have not been removed by RNase H as primers. PPTs and tRNA primers are then removed by RNase H. The 3' and 5' ssDNA PBS regions hybridize to form a circular dsDNA intermediate. Strand displacement synthesis by RT to the PBS and PPT ends produces a blunt ended, linear dsDNA copy of the viral genome that includes long terminal repeats (LTRs) at both ends. Its function is as follows. Catalyzes viral DNA integration into the host chromosome, by performing a series of DNA cutting and joining reactions. This enzyme activity takes place after virion entry into a cell and reverse transcription of the RNA genome in dsDNA. The first step in the integration process is 3' processing. This step requires a complex comprising the viral genome, matrix protein, Vpr and integrase. This complex is called the pre-integration complex (PIC). The integrase protein removes 2 nucleotides from each 3' end of the viral DNA, leaving recessed CA OH's at the 3' ends. In the second step, the PIC enters cell nucleus. This process is mediated through integrase and Vpr proteins, and allows the virus to infect a non dividing cell. This ability to enter the nucleus is specific of lentiviruses, other retroviruses cannot and rely on cell division to access cell chromosomes. In the third step, termed strand transfer, the integrase protein joins the previously processed 3' ends to the 5' ends of strands of target cellular DNA at the site of integration. The 5'-ends are produced by integrase-catalyzed staggered cuts, 5 bp apart. A Y-shaped, gapped, recombination intermediate results, with the 5'-ends of the viral DNA strands and the 3' ends of target DNA strands remaining unjoined, flanking a gap of 5 bp. The last step is viral DNA integration into host chromosome. This involves host DNA repair synthesis in which the 5 bp gaps between the unjoined strands are filled in and then ligated. Since this process occurs at both cuts flanking the HIV genome, a 5 bp duplication of host DNA is produced at the ends of HIV-1 integration. Alternatively, Integrase may catalyze the excision of viral DNA just after strand transfer, this is termed disintegration. This chain is Gag-Pol polyprotein (gag-pol), found in Homo sapiens (Human).